Reading from the N-terminus, the 478-residue chain is Glutamyl-tRNA(Gln) amidotransferase subunit A 2 (478 aa).

Catalysis depends on charge relay system residues lysine 79 and serine 154. The Acyl-ester intermediate role is filled by serine 178.

Belongs to the amidase family. GatA subfamily. In terms of assembly, heterotrimer of A, B and C subunits.

The catalysed reaction is L-glutamyl-tRNA(Gln) + L-glutamine + ATP + H2O = L-glutaminyl-tRNA(Gln) + L-glutamate + ADP + phosphate + H(+). Functionally, allows the formation of correctly charged Gln-tRNA(Gln) through the transamidation of misacylated Glu-tRNA(Gln) in organisms which lack glutaminyl-tRNA synthetase. The reaction takes place in the presence of glutamine and ATP through an activated gamma-phospho-Glu-tRNA(Gln). This Clostridium acetobutylicum (strain ATCC 824 / DSM 792 / JCM 1419 / IAM 19013 / LMG 5710 / NBRC 13948 / NRRL B-527 / VKM B-1787 / 2291 / W) protein is Glutamyl-tRNA(Gln) amidotransferase subunit A 2 (gatA2).